The following is a 314-amino-acid chain: Methionyl-tRNA formyltransferase (314 aa).

Position 110-113 (110-113) interacts with (6S)-5,6,7,8-tetrahydrofolate; sequence SLLP.

Belongs to the Fmt family.

The catalysed reaction is L-methionyl-tRNA(fMet) + (6R)-10-formyltetrahydrofolate = N-formyl-L-methionyl-tRNA(fMet) + (6S)-5,6,7,8-tetrahydrofolate + H(+). Its function is as follows. Attaches a formyl group to the free amino group of methionyl-tRNA(fMet). The formyl group appears to play a dual role in the initiator identity of N-formylmethionyl-tRNA by promoting its recognition by IF2 and preventing the misappropriation of this tRNA by the elongation apparatus. This chain is Methionyl-tRNA formyltransferase, found in Lactobacillus johnsonii (strain CNCM I-12250 / La1 / NCC 533).